The primary structure comprises 594 residues: MASSTPSSSATSSNAGADPNTTNLRPTTYDTWCGVAHGCTRKLGLKICGFLQRTNSLEEKSRLVSAFKERQSSKNLLSCENSDRDGRFRRTETDFSNLFARDLLPAKNGEEQTVQFLLEVVDILLNYVRKTFDRSTKVLDFHHPHQLLEGMEGFNLELSDHPESLEQILVDCRDTLKYGVRTGHPRFFNQLSTGLDIIGLAGEWLTSTANTNMFTYEIAPVFVLMEQITLKKMREIVGWSSKDGDGIFSPGGAISNMYSIMAARYKFFPEVKTKGMAAVPKLVLFTSEHSHYSIKKAGAALGFGTDNVILIKCNERGKIIPADLEAKILEAKQKGYVPLYVNATAGTTVYGAFDPIQEIADICEKYNLWLHVDAAWGGGLLMSRKHRHKLSGIERANSVTWNPHKMMGVLLQCSAILVKEKGILQGCNQMCAGYLFQPDKQYDVSYDTGDKAIQCGRHVDIFKFWLMWKAKGTVGFENQINKCLELAEYLYAKIKNREEFEMVFDGEPEHTNVCFWYIPQSLRGIPDSPERREKLHRVAPKIKALMMESGTTMVGYQPQGDKANFFRMVISNPAATQSDIDFLIEEIERLGQDL.

A compositionally biased stretch (low complexity) spans 1–13 (MASSTPSSSATSS). Residues 1–23 (MASSTPSSSATSSNAGADPNTTN) form a disordered region. Residue serine 78 is modified to Phosphoserine. 190 to 192 (QLS) contacts 4-aminobutanoate. Lysine 405 is subject to N6-(pyridoxal phosphate)lysine. Arginine 567 contacts 4-aminobutanoate.

Belongs to the group II decarboxylase family. In terms of assembly, homodimer. Requires pyridoxal 5'-phosphate as cofactor.

The catalysed reaction is L-glutamate + H(+) = 4-aminobutanoate + CO2. Its function is as follows. Catalyzes the synthesis of the inhibitory neurotransmitter gamma-aminobutyric acid (GABA) with pyridoxal 5'-phosphate as cofactor. The protein is Glutamate decarboxylase 1 (GAD1) of Felis catus (Cat).